A 797-amino-acid chain; its full sequence is Short transient receptor potential channel 4-associated protein (797 aa).

Ala-2 is subject to N-acetylalanine. The interval 2–400 (AAAPAAAGAG…VLYVLCVLLM (399 aa)) is interaction with TNFRSF1A.

Component of the DCX(TRPC4AP) E3 ubiquitin ligase complex, at least composed of CUL4A, DDB1, TRPC4AP/TRUSS and RBX1. Interacts with MYC. Constitutively associated with TNFRSF1A. Directly interacts with TRADD, TRAF2, CHUK, IKBKB and IKBKG. Interacts with TRPC1, TRPC4 and TRPC5. Phosphorylated by GSK3B; phosphorylation is required for ubiquitination. In terms of processing, ubiquitinated by a SCF (SKP1-CUL1-F-box protein) E3 ubiquitin-protein ligase containing SKP2, leading to its degradation. Phosphorylation by GSK3B is required for ubiquitination. As to expression, widely expressed, with high levels in heart, liver and testis.

Its subcellular location is the cytoplasm. The protein resides in the perinuclear region. It participates in protein modification; protein ubiquitination. Substrate-recognition component of a DCX (DDB1-CUL4-X-box) E3 ubiquitin-protein ligase complex required for cell cycle control. The DCX(TRPC4AP) complex specifically mediates the polyubiquitination and subsequent degradation of MYC as part of the DesCEND (destruction via C-end degrons) pathway. The DesCEND (destruction via C-end degrons) pathway recognizes a C-degron located at the extreme C terminus of target proteins, leading to their ubiquitination and degradation. The DCX(TRPC4AP) complex specifically recognizes proteins with an arginine at the minus 3 position (R-3 motif) at the C-terminus, such as MYC, leading to their ubiquitination and degradation. Also participates in the activation of NFKB1 in response to ligation of TNFRSF1A, possibly by linking TNFRSF1A to the IKK signalosome. Involved in JNK activation via its interaction with TRAF2. Also involved in elevation of endoplasmic reticulum Ca(2+) storage reduction in response to CHRM1. The protein is Short transient receptor potential channel 4-associated protein of Mus musculus (Mouse).